The primary structure comprises 47 residues: Large ribosomal subunit protein eL40 (47 aa).

This sequence belongs to the eukaryotic ribosomal protein eL40 family.

The chain is Large ribosomal subunit protein eL40 from Methanococcus vannielii (strain ATCC 35089 / DSM 1224 / JCM 13029 / OCM 148 / SB).